The sequence spans 123 residues: UPF0738 protein BCE_1319 (123 aa).

It belongs to the UPF0738 family.

The protein is UPF0738 protein BCE_1319 of Bacillus cereus (strain ATCC 10987 / NRS 248).